The primary structure comprises 222 residues: MSEANSTPTATLPSMRVSYEAGSLDEGSLAGTWHEQLALWFEQAVHDPSIHEANAMVLATADADGLPSSRTVLCKGFDARGVVFFTNYTSAKSHDLKVTRFAAATFPWLAMQRQVNVRGTVEKVSQEETAEYWAERPRGSQLGAWASPQSRVVSGRSALESTLNGIERRFADAEKVPVPPHWGGWRIVPESVEFWQGRPDRLHDRLRFRNNDGAWVVERLAP.

Substrate-binding positions include 16–19 (RVSY) and lysine 75. FMN contacts are provided by residues 70 to 75 (RTVLCK), 85 to 86 (FT), lysine 92, and glutamine 114. Substrate is bound by residues tyrosine 132, arginine 136, and serine 140. FMN-binding positions include 149 to 150 (QS) and tryptophan 195. 201–203 (RLH) contacts substrate. FMN is bound at residue arginine 205.

It belongs to the pyridoxamine 5'-phosphate oxidase family. Homodimer. Requires FMN as cofactor.

It carries out the reaction pyridoxamine 5'-phosphate + O2 + H2O = pyridoxal 5'-phosphate + H2O2 + NH4(+). The catalysed reaction is pyridoxine 5'-phosphate + O2 = pyridoxal 5'-phosphate + H2O2. It participates in cofactor metabolism; pyridoxal 5'-phosphate salvage; pyridoxal 5'-phosphate from pyridoxamine 5'-phosphate: step 1/1. The protein operates within cofactor metabolism; pyridoxal 5'-phosphate salvage; pyridoxal 5'-phosphate from pyridoxine 5'-phosphate: step 1/1. In terms of biological role, catalyzes the oxidation of either pyridoxine 5'-phosphate (PNP) or pyridoxamine 5'-phosphate (PMP) into pyridoxal 5'-phosphate (PLP). The chain is Pyridoxine/pyridoxamine 5'-phosphate oxidase from Saccharopolyspora erythraea (strain ATCC 11635 / DSM 40517 / JCM 4748 / NBRC 13426 / NCIMB 8594 / NRRL 2338).